A 342-amino-acid polypeptide reads, in one-letter code: tRNA N6-adenosine threonylcarbamoyltransferase (342 aa).

Fe cation is bound by residues His111 and His115. Substrate contacts are provided by residues 134–138, Asp167, Gly180, and Asn277; that span reads LVSGG. Asp305 contacts Fe cation.

This sequence belongs to the KAE1 / TsaD family. The cofactor is Fe(2+).

The protein localises to the cytoplasm. The enzyme catalyses L-threonylcarbamoyladenylate + adenosine(37) in tRNA = N(6)-L-threonylcarbamoyladenosine(37) in tRNA + AMP + H(+). Required for the formation of a threonylcarbamoyl group on adenosine at position 37 (t(6)A37) in tRNAs that read codons beginning with adenine. Is involved in the transfer of the threonylcarbamoyl moiety of threonylcarbamoyl-AMP (TC-AMP) to the N6 group of A37, together with TsaE and TsaB. TsaD likely plays a direct catalytic role in this reaction. This is tRNA N6-adenosine threonylcarbamoyltransferase from Cellvibrio japonicus (strain Ueda107) (Pseudomonas fluorescens subsp. cellulosa).